Reading from the N-terminus, the 94-residue chain is Integration host factor subunit beta (94 aa).

The protein belongs to the bacterial histone-like protein family. In terms of assembly, heterodimer of an alpha and a beta chain.

In terms of biological role, this protein is one of the two subunits of integration host factor, a specific DNA-binding protein that functions in genetic recombination as well as in transcriptional and translational control. This chain is Integration host factor subunit beta, found in Salmonella arizonae (strain ATCC BAA-731 / CDC346-86 / RSK2980).